A 495-amino-acid chain; its full sequence is Leucine aminopeptidase 2 (495 aa).

A signal peptide spans 1–21; sequence MKTQLLSLGVALTAISQGVIA. Residues 124–218 enclose the PA domain; that stretch reads PPADKITAEL…ADGKNLASLV (95 aa). N-linked (GlcNAc...) asparagine glycosylation is found at N142 and N235. Zn(2+) is bound by residues H259 and D271. N-linked (GlcNAc...) asparagine glycosylation is present at N272. Residue E303 is the Proton acceptor of the active site. Zn(2+)-binding residues include E304 and D332. N352 is a glycosylation site (N-linked (GlcNAc...) asparagine). Residue H430 coordinates Zn(2+). Residues 464–495 form a disordered region; sequence GFPTRPKTGKRDVSPRGQSMPGGGCGHHSVFM.

The protein belongs to the peptidase M28 family. M28A subfamily. Monomer. Requires Zn(2+) as cofactor.

It is found in the secreted. Extracellular aminopeptidase that releases a wide variety of amino acids from natural peptides and contributes to pathogenicity. This is Leucine aminopeptidase 2 (LAP2) from Arthroderma otae (strain ATCC MYA-4605 / CBS 113480) (Microsporum canis).